A 160-amino-acid chain; its full sequence is Transcriptional repressor NrdR (160 aa).

The segment at cysteine 3–cysteine 34 is a zinc-finger region. Residues proline 49–glutamate 139 form the ATP-cone domain.

Belongs to the NrdR family. Zn(2+) serves as cofactor.

In terms of biological role, negatively regulates transcription of bacterial ribonucleotide reductase nrd genes and operons by binding to NrdR-boxes. In Bordetella bronchiseptica (strain ATCC BAA-588 / NCTC 13252 / RB50) (Alcaligenes bronchisepticus), this protein is Transcriptional repressor NrdR.